A 362-amino-acid polypeptide reads, in one-letter code: Molybdopterin synthase catalytic subunit (362 aa).

Residues 101-102, Lys117, and 124-126 each bind substrate; these read HR and KKE.

Belongs to the MoaE family. MOCS2B subfamily. Heterotetramer; composed of 2 small (Mocs2A) and 2 large (Mocs2B) subunits.

It localises to the cytoplasm. The enzyme catalyses 2 [molybdopterin-synthase sulfur-carrier protein]-C-terminal-Gly-aminoethanethioate + cyclic pyranopterin phosphate + H2O = molybdopterin + 2 [molybdopterin-synthase sulfur-carrier protein]-C-terminal Gly-Gly + 2 H(+). It functions in the pathway cofactor biosynthesis; molybdopterin biosynthesis. In terms of biological role, catalytic subunit of the molybdopterin synthase complex, a complex that catalyzes the conversion of precursor Z into molybdopterin. Acts by mediating the incorporation of 2 sulfur atoms from thiocarboxylated Mocs2A into precursor Z to generate a dithiolene group. This Drosophila grimshawi (Hawaiian fruit fly) protein is Molybdopterin synthase catalytic subunit.